We begin with the raw amino-acid sequence, 298 residues long: Apolipoprotein E (298 aa).

The first 18 residues, 1–18 (MKILWAALVLTLLAGCRA), serve as a signal peptide directing secretion. 6 repeat units span residues 74-95 (LLMEDTMKELKAYKSELEKEVG), 96-117 (PMAEDTKARLSKELQGAQARLA), 118-139 (GDMEEVRNRLSQYRSEVQAMLG), 140-161 (QSSEELRARLASHLRKLRKRLQ), 162-183 (RDAEELQKRLAVYKAGAQEGAE), and 223-244 (GRLEKVGSQARDRLEEVREQME). The tract at residues 74–244 (LLMEDTMKEL…RLEEVREQME (171 aa)) is 8 X 22 AA approximate tandem repeats. Met137 carries the methionine sulfoxide modification. Phosphoserine is present on Ser141. An LDL and other lipoprotein receptors binding region spans residues 152 to 162 (HLRKLRKRLQR). 156–159 (LRKR) provides a ligand contact to heparin. The tract at residues 204–272 (ALTSHPLRER…SWFEPMVEDL (69 aa)) is lipid-binding and lipoprotein association. 218 to 225 (GEQVRGRL) provides a ligand contact to heparin. Residues 260 to 272 (RLKSWFEPMVEDL) form a specificity for association with VLDL region.

This sequence belongs to the apolipoprotein A1/A4/E family. Homotetramer. May interact with ABCA1; functionally associated with ABCA1 in the biogenesis of HDLs. May interact with APP/A4 amyloid-beta peptide; the interaction is extremely stable in vitro but its physiological significance is unclear. May interact with MAPT. May interact with MAP2. In the cerebrospinal fluid, interacts with secreted SORL1. Interacts with PMEL; this allows the loading of PMEL luminal fragment on ILVs to induce fibril nucleation. Post-translationally, APOE exists as multiple glycosylated and sialylated glycoforms within cells and in plasma. The extent of glycosylation and sialylation are tissue and context specific. Glycated in plasma VLDL. In terms of processing, phosphorylated by FAM20C in the extracellular medium.

It localises to the secreted. Its subcellular location is the extracellular space. The protein resides in the extracellular matrix. It is found in the extracellular vesicle. The protein localises to the endosome. It localises to the multivesicular body. APOE is an apolipoprotein, a protein associating with lipid particles, that mainly functions in lipoprotein-mediated lipid transport between organs via the plasma and interstitial fluids. APOE is a core component of plasma lipoproteins and is involved in their production, conversion and clearance. Apolipoproteins are amphipathic molecules that interact both with lipids of the lipoprotein particle core and the aqueous environment of the plasma. As such, APOE associates with chylomicrons, chylomicron remnants, very low density lipoproteins (VLDL) and intermediate density lipoproteins (IDL) but shows a preferential binding to high-density lipoproteins (HDL). It also binds a wide range of cellular receptors including the LDL receptor/LDLR, the LDL receptor-related proteins LRP1, LRP2 and LRP8 and the very low-density lipoprotein receptor/VLDLR that mediate the cellular uptake of the APOE-containing lipoprotein particles. Finally, APOE also has a heparin-binding activity and binds heparan-sulfate proteoglycans on the surface of cells, a property that supports the capture and the receptor-mediated uptake of APOE-containing lipoproteins by cells. A main function of APOE is to mediate lipoprotein clearance through the uptake of chylomicrons, VLDLs, and HDLs by hepatocytes. APOE is also involved in the biosynthesis by the liver of VLDLs as well as their uptake by peripheral tissues ensuring the delivery of triglycerides and energy storage in muscle, heart and adipose tissues. By participating in the lipoprotein-mediated distribution of lipids among tissues, APOE plays a critical role in plasma and tissues lipid homeostasis. APOE is also involved in two steps of reverse cholesterol transport, the HDLs-mediated transport of cholesterol from peripheral tissues to the liver, and thereby plays an important role in cholesterol homeostasis. First, it is functionally associated with ABCA1 in the biogenesis of HDLs in tissues. Second, it is enriched in circulating HDLs and mediates their uptake by hepatocytes. APOE also plays an important role in lipid transport in the central nervous system, regulating neuron survival and sprouting. This chain is Apolipoprotein E (APOE), found in Hydrochoerus hydrochaeris (Capybara).